The following is a 131-amino-acid chain: Small ribosomal subunit protein uS8 (131 aa).

It belongs to the universal ribosomal protein uS8 family. In terms of assembly, part of the 30S ribosomal subunit. Contacts proteins S5 and S12.

Its function is as follows. One of the primary rRNA binding proteins, it binds directly to 16S rRNA central domain where it helps coordinate assembly of the platform of the 30S subunit. This Chlorobium chlorochromatii (strain CaD3) protein is Small ribosomal subunit protein uS8.